The primary structure comprises 506 residues: Maturase K (506 aa).

It belongs to the intron maturase 2 family. MatK subfamily.

The protein resides in the plastid. The protein localises to the chloroplast. Its function is as follows. Usually encoded in the trnK tRNA gene intron. Probably assists in splicing its own and other chloroplast group II introns. The polypeptide is Maturase K (Trifolium lupinaster (Lupine clover)).